The following is an 883-amino-acid chain: Kinesin-like protein 5 (883 aa).

One can recognise a Kinesin motor domain in the interval 6–390 (SITVTVRVRP…LKYANRAKNI (385 aa)). ATP is bound at residue 144-151 (GATGCGKT). Coiled-coil stretches lie at residues 396 to 435 (RNMISVDRHVSQYVKAIVELREQISELENRLAQIDLSSQS) and 563 to 588 (LQDEVDLLKSIIENQVLDAQNKVDEF). Positions 755–785 (VSPMLEDKPEPGLLIKSPLEKKQEVNSESTQ) are disordered.

Belongs to the TRAFAC class myosin-kinesin ATPase superfamily. Kinesin family. Kinesin II subfamily. As to quaternary structure, heterodimer with klp6.

Its subcellular location is the cytoplasm. The protein resides in the cytoskeleton. It localises to the chromosome. It is found in the centromere. The protein localises to the kinetochore. Its subcellular location is the spindle. Functionally, has a role in establishing metaphase during mitosis. Required for chromosome segregation where it generates tension during kinetochore capturing. This chain is Kinesin-like protein 5 (klp5), found in Schizosaccharomyces pombe (strain 972 / ATCC 24843) (Fission yeast).